We begin with the raw amino-acid sequence, 245 residues long: 1-(5-phosphoribosyl)-5-[(5-phosphoribosylamino)methylideneamino] imidazole-4-carboxamide isomerase (245 aa).

Aspartate 7 (proton acceptor) is an active-site residue. The active-site Proton donor is the aspartate 129.

It belongs to the HisA/HisF family.

It localises to the cytoplasm. The catalysed reaction is 1-(5-phospho-beta-D-ribosyl)-5-[(5-phospho-beta-D-ribosylamino)methylideneamino]imidazole-4-carboxamide = 5-[(5-phospho-1-deoxy-D-ribulos-1-ylimino)methylamino]-1-(5-phospho-beta-D-ribosyl)imidazole-4-carboxamide. It participates in amino-acid biosynthesis; L-histidine biosynthesis; L-histidine from 5-phospho-alpha-D-ribose 1-diphosphate: step 4/9. The protein is 1-(5-phosphoribosyl)-5-[(5-phosphoribosylamino)methylideneamino] imidazole-4-carboxamide isomerase of Shewanella sp. (strain ANA-3).